We begin with the raw amino-acid sequence, 186 residues long: ATP-dependent protease subunit HslV (186 aa).

Residue Thr-14 is part of the active site. 3 residues coordinate Na(+): Ala-168, Cys-171, and Thr-174.

Belongs to the peptidase T1B family. HslV subfamily. In terms of assembly, a double ring-shaped homohexamer of HslV is capped on each side by a ring-shaped HslU homohexamer. The assembly of the HslU/HslV complex is dependent on binding of ATP.

The protein resides in the cytoplasm. It catalyses the reaction ATP-dependent cleavage of peptide bonds with broad specificity.. With respect to regulation, allosterically activated by HslU binding. In terms of biological role, protease subunit of a proteasome-like degradation complex believed to be a general protein degrading machinery. The polypeptide is ATP-dependent protease subunit HslV (Bradyrhizobium diazoefficiens (strain JCM 10833 / BCRC 13528 / IAM 13628 / NBRC 14792 / USDA 110)).